Here is a 222-residue protein sequence, read N- to C-terminus: 7-carboxy-7-deazaguanine synthase (222 aa).

Substrate is bound by residues 16–18 and R31; that span reads LQG. The Radical SAM core domain occupies 22-222; it reads NLGRPAVFVR…IMAWGNARGK (201 aa). Residues C35, C39, and C42 each contribute to the [4Fe-4S] cluster site. A Mg(2+)-binding site is contributed by T44. T77 lines the substrate pocket. S-adenosyl-L-methionine is bound by residues G79 and 126 to 128; that span reads SPK.

It belongs to the radical SAM superfamily. 7-carboxy-7-deazaguanine synthase family. Homodimer. [4Fe-4S] cluster is required as a cofactor. The cofactor is S-adenosyl-L-methionine. Mg(2+) serves as cofactor.

The enzyme catalyses 6-carboxy-5,6,7,8-tetrahydropterin + H(+) = 7-carboxy-7-deazaguanine + NH4(+). Its pathway is purine metabolism; 7-cyano-7-deazaguanine biosynthesis. Catalyzes the complex heterocyclic radical-mediated conversion of 6-carboxy-5,6,7,8-tetrahydropterin (CPH4) to 7-carboxy-7-deazaguanine (CDG), a step common to the biosynthetic pathways of all 7-deazapurine-containing compounds. The chain is 7-carboxy-7-deazaguanine synthase from Pyrobaculum aerophilum (strain ATCC 51768 / DSM 7523 / JCM 9630 / CIP 104966 / NBRC 100827 / IM2).